The sequence spans 118 residues: BLOC-1-related complex subunit 8 (118 aa).

A compositionally biased stretch (polar residues) spans K98–R107. Positions K98–S118 are disordered.

Belongs to the BORCS8 family.

The protein resides in the lysosome membrane. Its function is as follows. As part of a BORC-like complex, it may play a role in the movement and localization of lysosomes at the cell periphery. Associated with the cytosolic face of lysosomes, this complex may couple lysosomes to microtubule plus-end-directed kinesin motors, driving lysosome movement toward the cell periphery. The sequence is that of BLOC-1-related complex subunit 8 from Tetraodon nigroviridis (Spotted green pufferfish).